The sequence spans 108 residues: Ig kappa chain V-V region NQ5-89.4 (108 aa).

A framework-1 region spans residues 1–23; that stretch reads DIQMTQTTSSLSASLGHRVTITC. Cys-23 and Cys-88 are disulfide-bonded. Residues 24 to 34 form a complementarity-determining-1 region; that stretch reads SASQDISNYLN. The segment at 35-49 is framework-2; sequence WYQQKPDGTVKLLIY. The interval 50–56 is complementarity-determining-2; sequence YTSRLHS. Positions 57–88 are framework-3; sequence GVPSRFSGSGSATDYSLTITNLQQEDXATYXC. Positions 89-97 are complementarity-determining-3; it reads QQGNTLPYT. Residues 98–107 are framework-4; it reads FGGGTKLXIK.

Anti-2-phenyl oxazolone (PHOX) Antibody. This Mus musculus (Mouse) protein is Ig kappa chain V-V region NQ5-89.4.